The sequence spans 1023 residues: Sodium/potassium-transporting ATPase subunit alpha-1 (1023 aa).

Residues 1–5 (MGKGV) constitute a propeptide that is removed on maturation. The segment covering 1-11 (MGKGVGRDKYE) has biased composition (basic and acidic residues). Positions 1 to 38 (MGKGVGRDKYEPAAVSEHGDKKSKKAKKERDMDELKKE) are disordered. Residues 6–87 (GRDKYEPAAV…NALTPPPTTP (82 aa)) lie on the Cytoplasmic side of the membrane. Lys9 carries the post-translational modification N6-acetyllysine. Tyr10 is modified (phosphotyrosine). Ser16 is subject to Phosphoserine; by PKC. Lys21 carries the post-translational modification N6-acetyllysine. A Phosphoserine; by PKC modification is found at Ser23. The segment covering 28–38 (KERDMDELKKE) has biased composition (basic and acidic residues). A phosphoserine mark is found at Ser40 and Ser47. The interval 82 to 84 (PPP) is phosphoinositide-3 kinase binding. Residues 88-108 (EWVKFCRQLFGGFSMLLWIGA) traverse the membrane as a helical segment. The Extracellular portion of the chain corresponds to 109 to 131 (ILCFLAYGIRSATEEEPPNDDLY). A helical membrane pass occupies residues 132-152 (LGVVLSAVVIITGCFSYYQEA). Residues 153–288 (KSSKIMESFK…GGQTPIAEEI (136 aa)) lie on the Cytoplasmic side of the membrane. Residues 216–235 (SSLTGESEPQTRSPDFTNEN) form a disordered region. Position 228 is a phosphoserine (Ser228). Tyr260 is subject to Phosphotyrosine. Residues 289-308 (EHFIHLITGVAVFLGVSFFI) traverse the membrane as a helical segment. The Extracellular portion of the chain corresponds to 309-320 (LSLILEYTWLEA). A helical transmembrane segment spans residues 321–338 (VIFLIGIIVANVPEGLLA). The Cytoplasmic portion of the chain corresponds to 339–772 (TVTVCLTLTA…EEGRLIFDNL (434 aa)). Asp376 serves as the catalytic 4-aspartylphosphate intermediate. Phosphoserine occurs at positions 452 and 484. An ATP-binding site is contributed by Lys487. Tyr542 is modified (phosphotyrosine). The interval 596–717 (RAAVPDAVGK…QGAIVAVTGD (122 aa)) is mediates interaction with SCN7A. The residue at position 661 (Lys661) is an N6-succinyllysine. Residues Ser668 and Ser675 each carry the phosphoserine modification. The Mg(2+) site is built by Asp717 and Asp721. The chain crosses the membrane as a helical span at residues 773–792 (KKSIAYTLTSNIPEITPFLI). Residues 793-802 (FIIANIPLPL) lie on the Extracellular side of the membrane. Residues 803-823 (GTVTILCIDLGTDMVPAISLA) form a helical membrane-spanning segment. Over 824–843 (YEQAESDIMKRQPRNPKTDK) the chain is Cytoplasmic. A helical membrane pass occupies residues 844–866 (LVNERLISMAYGQIGMIQALGGF). Topologically, residues 867–918 (FTYFVILAENGFLPFHLLGIRETWDDRWINDVEDSYGQQWTYEQRKIVEFTC) are extracellular. Residues 919-938 (HTAFFVSIVVVQWADLVICK) traverse the membrane as a helical segment. The Cytoplasmic portion of the chain corresponds to 939-951 (TRRNSVFQQGMKN). Ser943 carries the phosphoserine; by PKA modification. The chain crosses the membrane as a helical span at residues 952-970 (KILIFGLFEETALAAFLSY). At 971–985 (CPGMGAALRMYPLKP) the chain is on the extracellular side. Residues 986-1006 (TWWFCAFPYSLLIFVYDEVRK) form a helical membrane-spanning segment. The Cytoplasmic segment spans residues 1007-1023 (LIIRRRPGGWVEKETYY).

It belongs to the cation transport ATPase (P-type) (TC 3.A.3) family. Type IIC subfamily. In terms of assembly, the sodium/potassium-transporting ATPase is composed of a catalytic alpha subunit, an auxiliary non-catalytic beta subunit and an additional regulatory subunit. Interacts with regulatory subunit FXYD1. Interacts with regulatory subunit FXYD3. Interacts with SLC35G1 and STIM1. Interacts with SIK1. Interacts with CLN3; this interaction regulates the sodium/potassium-transporting ATPase complex localization at the plasma membrane. Interacts with SCN7A; activates ATP1A1 P-type sodium:potassium-exchanging transporter activity which indirectly signals to nearby neurons to regulate sodium homeostasis. Post-translationally, phosphorylation on Tyr-10 modulates pumping activity. Phosphorylation of Ser-943 by PKA modulates the response of ATP1A1 to PKC. Dephosphorylation by protein phosphatase 2A (PP2A) following increases in intracellular sodium, leading to increase catalytic activity. Expressed in the central nervous system, in most motor and sensory axons of the ventral and dorsal roots, as well as in the large motor neurons of the ventral horn (at protein level).

It localises to the cell membrane. The protein localises to the basolateral cell membrane. The protein resides in the sarcolemma. Its subcellular location is the cell projection. It is found in the axon. It localises to the melanosome. The enzyme catalyses K(+)(out) + Na(+)(in) + ATP + H2O = K(+)(in) + Na(+)(out) + ADP + phosphate + H(+). Its function is as follows. This is the catalytic component of the active enzyme, which catalyzes the hydrolysis of ATP coupled with the exchange of sodium and potassium ions across the plasma membrane. This action creates the electrochemical gradient of sodium and potassium ions, providing the energy for active transport of various nutrients. Could also be part of an osmosensory signaling pathway that senses body-fluid sodium levels and controls salt intake behavior as well as voluntary water intake to regulate sodium homeostasis. The protein is Sodium/potassium-transporting ATPase subunit alpha-1 (Atp1a1) of Rattus norvegicus (Rat).